We begin with the raw amino-acid sequence, 117 residues long: Immunoglobulin lambda variable 1-47 (117 aa).

Residues 1 to 19 (MAGFPLLLTLLTHCAGSWA) form the signal peptide. Pyrrolidone carboxylic acid is present on Q20. Residues 20 to 44 (QSVLTQPPSASGTPGQRVTISCSGS) are framework-1. In terms of domain architecture, Ig-like spans 20 to 117 (QSVLTQPPSA…CAAWDDSLSG (98 aa)). C41 and C108 are joined by a disulfide. The tract at residues 45-52 (SSNIGSNY) is complementarity-determining-1. The interval 53 to 69 (VYWYQQLPGTAPKLLIY) is framework-2. The segment at 70-72 (SNN) is complementarity-determining-2. Residues 73-108 (QRPSGVPDRFSGSKSGTSASLAISGLRSEDEADYYC) are framework-3. Residues 109–117 (AAWDDSLSG) form a complementarity-determining-3 region.

Immunoglobulins are composed of two identical heavy chains and two identical light chains; disulfide-linked.

It localises to the secreted. The protein resides in the cell membrane. In terms of biological role, v region of the variable domain of immunoglobulin light chains that participates in the antigen recognition. Immunoglobulins, also known as antibodies, are membrane-bound or secreted glycoproteins produced by B lymphocytes. In the recognition phase of humoral immunity, the membrane-bound immunoglobulins serve as receptors which, upon binding of a specific antigen, trigger the clonal expansion and differentiation of B lymphocytes into immunoglobulins-secreting plasma cells. Secreted immunoglobulins mediate the effector phase of humoral immunity, which results in the elimination of bound antigens. The antigen binding site is formed by the variable domain of one heavy chain, together with that of its associated light chain. Thus, each immunoglobulin has two antigen binding sites with remarkable affinity for a particular antigen. The variable domains are assembled by a process called V-(D)-J rearrangement and can then be subjected to somatic hypermutations which, after exposure to antigen and selection, allow affinity maturation for a particular antigen. The polypeptide is Immunoglobulin lambda variable 1-47 (Homo sapiens (Human)).